The chain runs to 1012 residues: Multiple C2 domain and transmembrane region protein 10 (1012 aa).

The C2 1 domain maps to 1-115 (MTEAKTGTGN…REGESVVQLY (115 aa)). Residues 141 to 203 (ENGENVRRVN…SQQNGQGQRM (63 aa)) form a disordered region. Basic residues predominate over residues 148–160 (RVNRSGGSKKSKK). 2 stretches are compositionally biased toward low complexity: residues 161–180 (VQNVSSSMAIQQQQQQQQQQ) and 188–202 (RGNQQQSQQNGQGQR). C2 domains follow at residues 262–376 (SSHK…PQWY), 411–551 (KAGN…SRWF), and 585–710 (YNSD…THSY). The Ca(2+) site is built by Glu296, Glu344, Asn346, and Glu349. The next 3 helical transmembrane spans lie at 810-830 (FFRLVNVISGLVAVAKLVEVM), 841-861 (VFVLAFLFMVLFPELLLPCLL), and 952-972 (ATFLFLMFCLLAAVGFYTVPV).

The protein belongs to the MCTP family. It depends on Ca(2+) as a cofactor. As to expression, highly expressed in roots meristems, shoot apical meristems (SAMs) and in incipient leaf primordia. Observed in flowers.

The protein resides in the endoplasmic reticulum membrane. Functionally, may function as a signaling molecule by regulating the trafficking of other regulators. This is Multiple C2 domain and transmembrane region protein 10 from Arabidopsis thaliana (Mouse-ear cress).